Consider the following 332-residue polypeptide: 4-hydroxythreonine-4-phosphate dehydrogenase (332 aa).

Substrate-binding residues include histidine 136 and threonine 137. A divalent metal cation-binding residues include histidine 166, histidine 211, and histidine 266. Positions 274, 283, and 292 each coordinate substrate.

The protein belongs to the PdxA family. In terms of assembly, homodimer. Zn(2+) is required as a cofactor. It depends on Mg(2+) as a cofactor. Co(2+) serves as cofactor.

The protein resides in the cytoplasm. The enzyme catalyses 4-(phosphooxy)-L-threonine + NAD(+) = 3-amino-2-oxopropyl phosphate + CO2 + NADH. Its pathway is cofactor biosynthesis; pyridoxine 5'-phosphate biosynthesis; pyridoxine 5'-phosphate from D-erythrose 4-phosphate: step 4/5. Functionally, catalyzes the NAD(P)-dependent oxidation of 4-(phosphooxy)-L-threonine (HTP) into 2-amino-3-oxo-4-(phosphooxy)butyric acid which spontaneously decarboxylates to form 3-amino-2-oxopropyl phosphate (AHAP). The polypeptide is 4-hydroxythreonine-4-phosphate dehydrogenase (Wigglesworthia glossinidia brevipalpis).